The sequence spans 392 residues: Formate-dependent phosphoribosylglycinamide formyltransferase (392 aa).

Residues 22-23 (EL) and glutamate 82 each bind N(1)-(5-phospho-beta-D-ribosyl)glycinamide. ATP is bound by residues arginine 114, lysine 155, 160–165 (SSGKGQ), 195–198 (EKII), and glutamate 203. The 190-residue stretch at 119–308 (VLVSKKLNIL…EFALHVRSFL (190 aa)) folds into the ATP-grasp domain. Mg(2+)-binding residues include glutamate 267 and glutamate 279. N(1)-(5-phospho-beta-D-ribosyl)glycinamide-binding positions include aspartate 286, lysine 355, and 362-363 (RR).

This sequence belongs to the PurK/PurT family. In terms of assembly, homodimer.

It catalyses the reaction N(1)-(5-phospho-beta-D-ribosyl)glycinamide + formate + ATP = N(2)-formyl-N(1)-(5-phospho-beta-D-ribosyl)glycinamide + ADP + phosphate + H(+). It participates in purine metabolism; IMP biosynthesis via de novo pathway; N(2)-formyl-N(1)-(5-phospho-D-ribosyl)glycinamide from N(1)-(5-phospho-D-ribosyl)glycinamide (formate route): step 1/1. Its function is as follows. Involved in the de novo purine biosynthesis. Catalyzes the transfer of formate to 5-phospho-ribosyl-glycinamide (GAR), producing 5-phospho-ribosyl-N-formylglycinamide (FGAR). Formate is provided by PurU via hydrolysis of 10-formyl-tetrahydrofolate. The polypeptide is Formate-dependent phosphoribosylglycinamide formyltransferase (Wigglesworthia glossinidia brevipalpis).